A 458-amino-acid polypeptide reads, in one-letter code: 3-isopropylmalate dehydratase large subunit (458 aa).

Cysteine 339, cysteine 399, and cysteine 402 together coordinate [4Fe-4S] cluster.

This sequence belongs to the aconitase/IPM isomerase family. LeuC type 1 subfamily. As to quaternary structure, heterodimer of LeuC and LeuD. [4Fe-4S] cluster serves as cofactor.

It carries out the reaction (2R,3S)-3-isopropylmalate = (2S)-2-isopropylmalate. It functions in the pathway amino-acid biosynthesis; L-leucine biosynthesis; L-leucine from 3-methyl-2-oxobutanoate: step 2/4. Catalyzes the isomerization between 2-isopropylmalate and 3-isopropylmalate, via the formation of 2-isopropylmaleate. The polypeptide is 3-isopropylmalate dehydratase large subunit (Lactococcus lactis subsp. cremoris (strain SK11)).